A 338-amino-acid polypeptide reads, in one-letter code: Eukaryotic translation initiation factor 3 subunit H (338 aa).

One can recognise an MPN domain in the interval 22 to 154 (VQCDGLAVMK…LKAYRLTPQA (133 aa)).

Belongs to the eIF-3 subunit H family. In terms of assembly, component of the eukaryotic translation initiation factor 3 (eIF-3) complex. The eIF-3 complex interacts with pix. Interacts with mxt.

It is found in the cytoplasm. Functionally, component of the eukaryotic translation initiation factor 3 (eIF-3) complex, which is involved in protein synthesis of a specialized repertoire of mRNAs and, together with other initiation factors, stimulates binding of mRNA and methionyl-tRNAi to the 40S ribosome. The eIF-3 complex specifically targets and initiates translation of a subset of mRNAs involved in cell proliferation. This Drosophila melanogaster (Fruit fly) protein is Eukaryotic translation initiation factor 3 subunit H.